A 114-amino-acid chain; its full sequence is Ribonuclease P protein component (114 aa).

Belongs to the RnpA family. Consists of a catalytic RNA component (M1 or rnpB) and a protein subunit.

It catalyses the reaction Endonucleolytic cleavage of RNA, removing 5'-extranucleotides from tRNA precursor.. Functionally, RNaseP catalyzes the removal of the 5'-leader sequence from pre-tRNA to produce the mature 5'-terminus. It can also cleave other RNA substrates such as 4.5S RNA. The protein component plays an auxiliary but essential role in vivo by binding to the 5'-leader sequence and broadening the substrate specificity of the ribozyme. The chain is Ribonuclease P protein component from Clostridioides difficile (strain 630) (Peptoclostridium difficile).